The following is a 166-amino-acid chain: Thioredoxin, mitochondrial (166 aa).

Residues 1–59 constitute a mitochondrion transit peptide; sequence MAQRLLLRRFLTSVISRKPPQGVWASLTSTSLQTPPYNAGGLTGTPSPARTFHTTRVCS. One can recognise a Thioredoxin domain in the interval 61–166; it reads TFNVQDGPDF…LEAFLKKLIG (106 aa). Residues Cys-90 and Cys-93 each act as nucleophile in the active site. An intrachain disulfide couples Cys-90 to Cys-93. Position 152 is an N6-acetyllysine; alternate (Lys-152). An N6-succinyllysine; alternate modification is found at Lys-152.

Belongs to the thioredoxin family. Monomer. In terms of tissue distribution, expressed in several tissues with the highest expression levels in heart, muscle, kidney and adrenal gland.

The protein localises to the mitochondrion. In terms of biological role, important for the control of mitochondrial reactive oxygen species homeostasis, apoptosis regulation and cell viability. Is involved in various redox reactions including the reduction of protein disulfide bonds, through the reversible oxidation of its active center dithiol to a disulfide. The sequence is that of Thioredoxin, mitochondrial (Txn2) from Rattus norvegicus (Rat).